Here is a 193-residue protein sequence, read N- to C-terminus: Ribosome hibernation promotion factor (193 aa).

It belongs to the HPF/YfiA ribosome-associated protein family. Long HPF subfamily. As to quaternary structure, interacts with 100S ribosomes.

The protein localises to the cytoplasm. In terms of biological role, might modulate either transcription and/or translation. Functionally, required for dimerization of active 70S ribosomes into 100S ribosomes in stationary phase; 100S ribosomes are translationally inactive and sometimes present during exponential growth. This is Ribosome hibernation promotion factor from Picosynechococcus sp. (strain ATCC 27264 / PCC 7002 / PR-6) (Agmenellum quadruplicatum).